The sequence spans 395 residues: Chaperone protein DnaJ (395 aa).

The 66-residue stretch at 5-70 folds into the J domain; sequence DFYEVLGVDK…NKRAAYDRMG (66 aa). The segment at 145 to 223 adopts a CR-type zinc-finger fold; the sequence is GKDETIKVPT…CDGVGRVRKT (79 aa). Residues Cys158, Cys161, Cys175, Cys178, Cys197, Cys200, Cys211, and Cys214 each contribute to the Zn(2+) site. CXXCXGXG motif repeat units follow at residues 158 to 165, 175 to 182, 197 to 204, and 211 to 218; these read CERCDGQG, CGTCQGAG, CPQCGGRG, and CNDCDGVG.

This sequence belongs to the DnaJ family. Homodimer. It depends on Zn(2+) as a cofactor.

It is found in the cytoplasm. In terms of biological role, participates actively in the response to hyperosmotic and heat shock by preventing the aggregation of stress-denatured proteins and by disaggregating proteins, also in an autonomous, DnaK-independent fashion. Unfolded proteins bind initially to DnaJ; upon interaction with the DnaJ-bound protein, DnaK hydrolyzes its bound ATP, resulting in the formation of a stable complex. GrpE releases ADP from DnaK; ATP binding to DnaK triggers the release of the substrate protein, thus completing the reaction cycle. Several rounds of ATP-dependent interactions between DnaJ, DnaK and GrpE are required for fully efficient folding. Also involved, together with DnaK and GrpE, in the DNA replication of plasmids through activation of initiation proteins. This is Chaperone protein DnaJ from Maricaulis maris (strain MCS10) (Caulobacter maris).